Here is a 398-residue protein sequence, read N- to C-terminus: Protein RecA (398 aa).

Position 83-90 (Gly83–Thr90) interacts with ATP. Positions Ala351–Glu398 are disordered. Positions Lys354–Ala365 are enriched in basic and acidic residues. The segment covering Ser375 to Ala389 has biased composition (acidic residues).

The protein belongs to the RecA family.

It localises to the cytoplasm. Can catalyze the hydrolysis of ATP in the presence of single-stranded DNA, the ATP-dependent uptake of single-stranded DNA by duplex DNA, and the ATP-dependent hybridization of homologous single-stranded DNAs. It interacts with LexA causing its activation and leading to its autocatalytic cleavage. The protein is Protein RecA of Ruminococcus albus (strain ATCC 27210 / DSM 20455 / JCM 14654 / NCDO 2250 / 7).